The following is an 873-amino-acid chain: DNA mismatch repair protein MutS (873 aa).

Positions 1–34 are disordered; sequence MAAIPTPRLHRGVTHLSRQTKSRARHPMSTPQHT. A compositionally biased stretch (basic residues) spans 8-26; the sequence is RLHRGVTHLSRQTKSRARH. Residue 635-642 participates in ATP binding; that stretch reads GPNMGGKS.

It belongs to the DNA mismatch repair MutS family.

Its function is as follows. This protein is involved in the repair of mismatches in DNA. It is possible that it carries out the mismatch recognition step. This protein has a weak ATPase activity. This Chromobacterium violaceum (strain ATCC 12472 / DSM 30191 / JCM 1249 / CCUG 213 / NBRC 12614 / NCIMB 9131 / NCTC 9757 / MK) protein is DNA mismatch repair protein MutS.